Consider the following 118-residue polypeptide: Cell division protein FtsB (118 aa).

Residues 1 to 3 (MRL) lie on the Cytoplasmic side of the membrane. The helical transmembrane segment at 4–21 (LFLVLLVLLGLIQYPLWL) threads the bilayer. Residues 22–118 (GKGGWFKVWD…PRPPATPPRR (97 aa)) lie on the Periplasmic side of the membrane. Residues 28 to 62 (KVWDLQRQVAEQRETNDGLRARNTALEAEVRDLAT) adopt a coiled-coil conformation. The segment at 88–118 (LPPGTPLPSGNSTPQASALSKPRPPATPPRR) is disordered. Residues 95-105 (PSGNSTPQASA) show a composition bias toward polar residues. The segment covering 109–118 (PRPPATPPRR) has biased composition (pro residues).

The protein belongs to the FtsB family. Part of a complex composed of FtsB, FtsL and FtsQ.

Its subcellular location is the cell inner membrane. In terms of biological role, essential cell division protein. May link together the upstream cell division proteins, which are predominantly cytoplasmic, with the downstream cell division proteins, which are predominantly periplasmic. This is Cell division protein FtsB from Bordetella parapertussis (strain 12822 / ATCC BAA-587 / NCTC 13253).